The sequence spans 71 residues: Beta-defensin 124 (71 aa).

A signal peptide spans 1 to 22; sequence MTQLLLFLVALLVLGHVPSGRS. Intrachain disulfides connect Cys-27–Cys-54, Cys-34–Cys-48, and Cys-38–Cys-55.

This sequence belongs to the beta-defensin family.

The protein resides in the secreted. Has antibacterial activity. This Pan troglodytes (Chimpanzee) protein is Beta-defensin 124 (DEFB124).